The primary structure comprises 312 residues: Pantothenate kinase (312 aa).

97–104 (GSVAVGKS) contributes to the ATP binding site.

This sequence belongs to the prokaryotic pantothenate kinase family.

The protein localises to the cytoplasm. It carries out the reaction (R)-pantothenate + ATP = (R)-4'-phosphopantothenate + ADP + H(+). Its pathway is cofactor biosynthesis; coenzyme A biosynthesis; CoA from (R)-pantothenate: step 1/5. The chain is Pantothenate kinase (coaA) from Mycobacterium leprae (strain TN).